Here is a 286-residue protein sequence, read N- to C-terminus: Polyamine aminopropyltransferase (286 aa).

Positions 5-238 (TMWHETLHDQ…GIMTFAWATD (234 aa)) constitute a PABS domain. Gln33 lines the S-methyl-5'-thioadenosine pocket. Spermidine contacts are provided by His64 and Asp88. S-methyl-5'-thioadenosine is bound by residues Glu108 and 140-141 (DG). Asp158 serves as the catalytic Proton acceptor. Residue 158–161 (DCTD) coordinates spermidine. Pro165 contributes to the S-methyl-5'-thioadenosine binding site.

It belongs to the spermidine/spermine synthase family. As to quaternary structure, homodimer or homotetramer.

The protein localises to the cytoplasm. It catalyses the reaction S-adenosyl 3-(methylsulfanyl)propylamine + putrescine = S-methyl-5'-thioadenosine + spermidine + H(+). It participates in amine and polyamine biosynthesis; spermidine biosynthesis; spermidine from putrescine: step 1/1. Catalyzes the irreversible transfer of a propylamine group from the amino donor S-adenosylmethioninamine (decarboxy-AdoMet) to putrescine (1,4-diaminobutane) to yield spermidine. This chain is Polyamine aminopropyltransferase, found in Salmonella paratyphi A (strain ATCC 9150 / SARB42).